The following is a 295-amino-acid chain: MPSAPQKTKSFRLQTKYVFLTYPRCSSSAENLRDFLWDKLSRFAIFFIAIATELHQDGTPHLHCLIQLDKRSNIRDPSFFDLEGNHPNIQPAKNSEQVLEYISKDGNVITKGEFKKHRVSPSKSDERWRTIIQTATSKEEYLDMIKDEFPHEWATKLQWLEYSANKLFPPQPEIYQATFTEEDLQCHEDLQLWRDQHLYHVSVDAYRLVHNVTLVEAHSDLVWMDDISRNLEGLEPGSPPSTSADQVVPERQHGPEASEGTITGMGPSTSLSMMTTRPTTSSTTSPSNSSHSGSN.

Residues 12 to 114 (RLQTKYVFLT…DGNVITKGEF (103 aa)) form the CRESS-DNA virus Rep endonuclease domain. An RCR-1 motif is present at residues 19-22 (FLTY). Positions 53, 61, and 63 each coordinate a divalent metal cation. The RCR-2 motif lies at 61–63 (HLH). The active-site For DNA cleavage activity is Y101. An RCR-3 motif is present at residues 101 to 104 (YISK). An a divalent metal cation-binding site is contributed by D105. The interval 163 to 175 (SANKLFPPQPEIY) is oligomerization. Positions 184-188 (LQCHE) match the LXCXE motif, interaction with host RBR1 motif. The segment at 232-295 (EGLEPGSPPS…PSNSSHSGSN (64 aa)) is disordered. Low complexity predominate over residues 267–295 (PSTSLSMMTTRPTTSSTTSPSNSSHSGSN).

This sequence belongs to the geminiviridae Rep protein family. As to quaternary structure, homooligomer. Interacts (via LXCXE domain) with host retinoblastoma-related protein 1 (RBR1), and may thereby deregulate the host cell cycle. Part of the C- and V-complexes which are RepA-Rep-DNA complexes involved in the c-sense and v-sense transcription. The cofactor is Mg(2+). It depends on Mn(2+) as a cofactor.

It localises to the host nucleus. The protein resides in the host cytoplasm. Implicated in enhancement of V-sense gene expression. Acts a an inhibitor of C-sense gene transcription. The sequence is that of Replication-associated protein A from Datura stramonium (Jimsonweed).